The chain runs to 640 residues: 1-deoxy-D-xylulose-5-phosphate synthase (640 aa).

Thiamine diphosphate-binding positions include H79 and 120-122 (GHS). D151 provides a ligand contact to Mg(2+). Thiamine diphosphate-binding positions include 152 to 153 (GG), N180, Y288, and E372. N180 is a binding site for Mg(2+).

This sequence belongs to the transketolase family. DXPS subfamily. As to quaternary structure, homodimer. Requires Mg(2+) as cofactor. Thiamine diphosphate is required as a cofactor.

The catalysed reaction is D-glyceraldehyde 3-phosphate + pyruvate + H(+) = 1-deoxy-D-xylulose 5-phosphate + CO2. It functions in the pathway metabolic intermediate biosynthesis; 1-deoxy-D-xylulose 5-phosphate biosynthesis; 1-deoxy-D-xylulose 5-phosphate from D-glyceraldehyde 3-phosphate and pyruvate: step 1/1. In terms of biological role, catalyzes the acyloin condensation reaction between C atoms 2 and 3 of pyruvate and glyceraldehyde 3-phosphate to yield 1-deoxy-D-xylulose-5-phosphate (DXP). This chain is 1-deoxy-D-xylulose-5-phosphate synthase, found in Nitrosococcus oceani (strain ATCC 19707 / BCRC 17464 / JCM 30415 / NCIMB 11848 / C-107).